Here is an 89-residue protein sequence, read N- to C-terminus: Protein S100-A6 (89 aa).

EF-hand domains follow at residues 12-47 (LVAI…IGSK) and 48-83 (LQDA…LALI). The Ca(2+) site is built by threonine 28 and glutamate 33. At lysine 40 the chain carries N6-acetyllysine. At serine 46 the chain carries Phosphoserine. Lysine 47 carries the N6-acetyllysine; alternate modification. Lysine 47 carries the post-translational modification N6-succinyllysine; alternate. Ca(2+) is bound by residues aspartate 61, asparagine 63, aspartate 65, glutamate 67, and glutamate 72.

This sequence belongs to the S-100 family. As to quaternary structure, homodimer; head to tail assembly of 2 subunits. Interacts with CACYBP in a calcium-dependent manner. Interacts with ANXA2 and ANXA11 (via N-terminus). Interacts with SUGT1. Interacts with TP53; has higher affinity for TP53 that is phosphorylated on its N-terminal domain, and lower affinity for TP53 that is phosphorylated on its C-terminal domain. Interacts with tropomyosin. Interacts with FKBP4. Interacts with PPP5C (via TPR repeats); the interaction is calcium-dependent and modulates PPP5C activity. Interacts with TPPP; this interaction inhibits TPPP dimerization.

It is found in the nucleus envelope. It localises to the cytoplasm. The protein resides in the cell membrane. May function as calcium sensor and modulator, contributing to cellular calcium signaling. May function by interacting with other proteins, such as TPR-containing proteins, and indirectly play a role in many physiological processes such as the reorganization of the actin cytoskeleton and in cell motility. Binds 2 calcium ions. Calcium binding is cooperative. This Mus musculus (Mouse) protein is Protein S100-A6 (S100a6).